A 537-amino-acid polypeptide reads, in one-letter code: Ataxin-10 homolog (537 aa).

This sequence belongs to the ataxin-10 family.

The protein resides in the cytoplasm. Functionally, may play a role in the regulation of cytokinesis. This chain is Ataxin-10 homolog (CTR86), found in Kluyveromyces lactis (strain ATCC 8585 / CBS 2359 / DSM 70799 / NBRC 1267 / NRRL Y-1140 / WM37) (Yeast).